Reading from the N-terminus, the 323-residue chain is tRNA U34 carboxymethyltransferase (323 aa).

Residues K91, W105, K110, G130, 152–154 (DPS), 181–182 (IE), M196, Y200, and R315 each bind carboxy-S-adenosyl-L-methionine.

The protein belongs to the class I-like SAM-binding methyltransferase superfamily. CmoB family. Homotetramer.

It catalyses the reaction carboxy-S-adenosyl-L-methionine + 5-hydroxyuridine(34) in tRNA = 5-carboxymethoxyuridine(34) in tRNA + S-adenosyl-L-homocysteine + H(+). In terms of biological role, catalyzes carboxymethyl transfer from carboxy-S-adenosyl-L-methionine (Cx-SAM) to 5-hydroxyuridine (ho5U) to form 5-carboxymethoxyuridine (cmo5U) at position 34 in tRNAs. The sequence is that of tRNA U34 carboxymethyltransferase from Vibrio parahaemolyticus serotype O3:K6 (strain RIMD 2210633).